Here is a 346-residue protein sequence, read N- to C-terminus: Aspartate-semialdehyde dehydrogenase (346 aa).

Residues 12–15 and 40–41 each bind NADP(+); these read SGAV and RS. Arginine 101 is a phosphate binding site. The Acyl-thioester intermediate role is filled by cysteine 131. Position 158 (glutamine 158) interacts with substrate. NADP(+) is bound at residue 161-162; the sequence is SG. A phosphate-binding site is contributed by lysine 225. Residue arginine 246 coordinates substrate. The active-site Proton acceptor is histidine 253. Glutamine 326 serves as a coordination point for NADP(+).

This sequence belongs to the aspartate-semialdehyde dehydrogenase family. Homodimer.

It catalyses the reaction L-aspartate 4-semialdehyde + phosphate + NADP(+) = 4-phospho-L-aspartate + NADPH + H(+). It functions in the pathway amino-acid biosynthesis; L-lysine biosynthesis via DAP pathway; (S)-tetrahydrodipicolinate from L-aspartate: step 2/4. The protein operates within amino-acid biosynthesis; L-methionine biosynthesis via de novo pathway; L-homoserine from L-aspartate: step 2/3. Its pathway is amino-acid biosynthesis; L-threonine biosynthesis; L-threonine from L-aspartate: step 2/5. Functionally, catalyzes the NADPH-dependent formation of L-aspartate-semialdehyde (L-ASA) by the reductive dephosphorylation of L-aspartyl-4-phosphate. The sequence is that of Aspartate-semialdehyde dehydrogenase from Helicobacter pylori (strain J99 / ATCC 700824) (Campylobacter pylori J99).